The sequence spans 515 residues: GMP synthase [glutamine-hydrolyzing] (515 aa).

The 193-residue stretch at Lys-6–Asp-198 folds into the Glutamine amidotransferase type-1 domain. The active-site Nucleophile is Cys-83. Active-site residues include His-172 and Glu-174. Positions Trp-199–Arg-390 constitute a GMPS ATP-PPase domain. Ser-226–Thr-232 provides a ligand contact to ATP.

As to quaternary structure, homodimer.

The catalysed reaction is XMP + L-glutamine + ATP + H2O = GMP + L-glutamate + AMP + diphosphate + 2 H(+). It participates in purine metabolism; GMP biosynthesis; GMP from XMP (L-Gln route): step 1/1. In terms of biological role, catalyzes the synthesis of GMP from XMP. The protein is GMP synthase [glutamine-hydrolyzing] of Nitratidesulfovibrio vulgaris (strain DSM 19637 / Miyazaki F) (Desulfovibrio vulgaris).